Consider the following 44-residue polypeptide: Thioredoxin (44 aa).

One can recognise a Thioredoxin domain in the interval 2–44; the sequence is IELDKSNFEEEVLKAEGTVLVDFWSPSCEPCKALMPHVHDFEE. C29 and C32 are joined by a disulfide.

Belongs to the thioredoxin family.

In terms of biological role, participates in various redox reactions through the reversible oxidation of its active center dithiol to a disulfide and catalyzes dithiol-disulfide exchange reactions. This chain is Thioredoxin (trxA), found in Tissierella creatinophila.